Consider the following 486-residue polypeptide: Bifunctional protein HldE (486 aa).

The tract at residues 1-329 (MSSRLSGLLD…AALSVAGPVG (329 aa)) is ribokinase. 204-207 (NAFE) is a binding site for ATP. Asp274 is an active-site residue. Positions 355-486 (FTNGCFDILH…AIIARSETGK (132 aa)) are cytidylyltransferase.

It in the N-terminal section; belongs to the carbohydrate kinase PfkB family. This sequence in the C-terminal section; belongs to the cytidylyltransferase family. As to quaternary structure, homodimer.

It catalyses the reaction D-glycero-beta-D-manno-heptose 7-phosphate + ATP = D-glycero-beta-D-manno-heptose 1,7-bisphosphate + ADP + H(+). The enzyme catalyses D-glycero-beta-D-manno-heptose 1-phosphate + ATP + H(+) = ADP-D-glycero-beta-D-manno-heptose + diphosphate. It functions in the pathway nucleotide-sugar biosynthesis; ADP-L-glycero-beta-D-manno-heptose biosynthesis; ADP-L-glycero-beta-D-manno-heptose from D-glycero-beta-D-manno-heptose 7-phosphate: step 1/4. Its pathway is nucleotide-sugar biosynthesis; ADP-L-glycero-beta-D-manno-heptose biosynthesis; ADP-L-glycero-beta-D-manno-heptose from D-glycero-beta-D-manno-heptose 7-phosphate: step 3/4. In terms of biological role, catalyzes the phosphorylation of D-glycero-D-manno-heptose 7-phosphate at the C-1 position to selectively form D-glycero-beta-D-manno-heptose-1,7-bisphosphate. Catalyzes the ADP transfer from ATP to D-glycero-beta-D-manno-heptose 1-phosphate, yielding ADP-D-glycero-beta-D-manno-heptose. The protein is Bifunctional protein HldE of Hyphomonas neptunium (strain ATCC 15444).